Consider the following 117-residue polypeptide: Large ribosomal subunit protein uL18 (117 aa).

This sequence belongs to the universal ribosomal protein uL18 family. Part of the 50S ribosomal subunit; part of the 5S rRNA/L5/L18/L25 subcomplex. Contacts the 5S and 23S rRNAs.

Its function is as follows. This is one of the proteins that bind and probably mediate the attachment of the 5S RNA into the large ribosomal subunit, where it forms part of the central protuberance. The protein is Large ribosomal subunit protein uL18 of Thiobacillus denitrificans (strain ATCC 25259 / T1).